The sequence spans 380 residues: Queuine tRNA-ribosyltransferase (380 aa).

The active-site Proton acceptor is the D96. Substrate-binding positions include 96–100 (DSGGF), D150, Q193, and G220. Residues 251-257 (GVGAPDS) are RNA binding. The active-site Nucleophile is the D270. The segment at 275–279 (TRIAR) is RNA binding; important for wobble base 34 recognition. Zn(2+) contacts are provided by C308, C310, C313, and H339.

It belongs to the queuine tRNA-ribosyltransferase family. Homodimer. Within each dimer, one monomer is responsible for RNA recognition and catalysis, while the other monomer binds to the replacement base PreQ1. Zn(2+) is required as a cofactor.

The catalysed reaction is 7-aminomethyl-7-carbaguanine + guanosine(34) in tRNA = 7-aminomethyl-7-carbaguanosine(34) in tRNA + guanine. It participates in tRNA modification; tRNA-queuosine biosynthesis. Its function is as follows. Catalyzes the base-exchange of a guanine (G) residue with the queuine precursor 7-aminomethyl-7-deazaguanine (PreQ1) at position 34 (anticodon wobble position) in tRNAs with GU(N) anticodons (tRNA-Asp, -Asn, -His and -Tyr). Catalysis occurs through a double-displacement mechanism. The nucleophile active site attacks the C1' of nucleotide 34 to detach the guanine base from the RNA, forming a covalent enzyme-RNA intermediate. The proton acceptor active site deprotonates the incoming PreQ1, allowing a nucleophilic attack on the C1' of the ribose to form the product. After dissociation, two additional enzymatic reactions on the tRNA convert PreQ1 to queuine (Q), resulting in the hypermodified nucleoside queuosine (7-(((4,5-cis-dihydroxy-2-cyclopenten-1-yl)amino)methyl)-7-deazaguanosine). This Streptococcus pneumoniae (strain ATCC BAA-255 / R6) protein is Queuine tRNA-ribosyltransferase.